The following is a 269-amino-acid chain: 4-hydroxy-tetrahydrodipicolinate reductase (269 aa).

11–16 contacts NAD(+); that stretch reads GPIGRM. Position 39 (Lys39) interacts with NADP(+). NAD(+) is bound by residues 101-103 and 125-128; these read GTT and ASNF. His158 acts as the Proton donor/acceptor in catalysis. His159 is a (S)-2,3,4,5-tetrahydrodipicolinate binding site. Lys162 functions as the Proton donor in the catalytic mechanism. 168–169 is a (S)-2,3,4,5-tetrahydrodipicolinate binding site; the sequence is GT.

This sequence belongs to the DapB family. In terms of assembly, homotetramer.

The protein resides in the cytoplasm. It carries out the reaction (S)-2,3,4,5-tetrahydrodipicolinate + NAD(+) + H2O = (2S,4S)-4-hydroxy-2,3,4,5-tetrahydrodipicolinate + NADH + H(+). It catalyses the reaction (S)-2,3,4,5-tetrahydrodipicolinate + NADP(+) + H2O = (2S,4S)-4-hydroxy-2,3,4,5-tetrahydrodipicolinate + NADPH + H(+). It functions in the pathway amino-acid biosynthesis; L-lysine biosynthesis via DAP pathway; (S)-tetrahydrodipicolinate from L-aspartate: step 4/4. Catalyzes the conversion of 4-hydroxy-tetrahydrodipicolinate (HTPA) to tetrahydrodipicolinate. The protein is 4-hydroxy-tetrahydrodipicolinate reductase of Buchnera aphidicola subsp. Acyrthosiphon pisum (strain 5A).